Here is a 394-residue protein sequence, read N- to C-terminus: MSDTIVIVDAGRTAIGTFGGALSALQATDIGTTVLKALIERTGIAPEQVSEVILGQVLTAGCGQNPARQTTLMAGLPHTVPAMTINKVCGSGLKAVHLAMQAVACGDAEIVIAGGQESMSQSSHVLPRSREGQRMGDWPMKDTMIVDGLWDAFNQCHMGVTAENIAKKYAFTREAQDAFAAASQQKAEAAIQSGRFADEIIPVSIPQRKGDPLVFDTDEFPRPGTTAETLGRLRPAFDKQGTVTAGNASGINDGAAMVVVMKESKAKELGLTPMARLVAFSSAGVDPAIMGTGPIPASTDCLKKAGWAPADLDLVEANEAFAAQAMSVNQEMGWDLSKVNVNGGAIAIGHPIGASGARVLVTLLYEMQKRDAKKGLATLCIGGGQGVALAVERL.

The active-site Acyl-thioester intermediate is C89. Residues H350 and C380 each act as proton acceptor in the active site.

The protein belongs to the thiolase-like superfamily. Thiolase family. In terms of assembly, homotetramer.

The protein resides in the cytoplasm. The catalysed reaction is 2 acetyl-CoA = acetoacetyl-CoA + CoA. It participates in biopolymer metabolism; poly-(R)-3-hydroxybutanoate biosynthesis. It functions in the pathway metabolic intermediate biosynthesis; (R)-mevalonate biosynthesis; (R)-mevalonate from acetyl-CoA: step 1/3. The chain is Acetyl-CoA acetyltransferase from Thiocystis violacea.